Reading from the N-terminus, the 245-residue chain is NAD-dependent protein deacylase (245 aa).

The Deacetylase sirtuin-type domain maps to 1–245 (MEAVWESARI…RLSRAMGIDI (245 aa)). An NAD(+)-binding site is contributed by 22 to 41 (GAGISAESGIPTFRGKDGLW). Substrate-binding residues include tyrosine 66 and arginine 69. NAD(+) is bound at residue 100–103 (QNVD). Histidine 118 acts as the Proton acceptor in catalysis. Residues cysteine 126, cysteine 129, cysteine 146, and cysteine 149 each contribute to the Zn(2+) site. NAD(+) contacts are provided by residues 186–188 (GTS), 212–214 (NPE), and methionine 241.

This sequence belongs to the sirtuin family. Class III subfamily. It depends on Zn(2+) as a cofactor.

Its subcellular location is the cytoplasm. It carries out the reaction N(6)-acetyl-L-lysyl-[protein] + NAD(+) + H2O = 2''-O-acetyl-ADP-D-ribose + nicotinamide + L-lysyl-[protein]. It catalyses the reaction N(6)-succinyl-L-lysyl-[protein] + NAD(+) + H2O = 2''-O-succinyl-ADP-D-ribose + nicotinamide + L-lysyl-[protein]. NAD-dependent lysine deacetylase and desuccinylase that specifically removes acetyl and succinyl groups on target proteins. Modulates the activities of several proteins which are inactive in their acylated form. Deacetylates the N-terminal lysine residue of Alba, the major archaeal chromatin protein and that, in turn, increases Alba's DNA binding affinity, thereby repressing transcription. This chain is NAD-dependent protein deacylase, found in Aeropyrum pernix (strain ATCC 700893 / DSM 11879 / JCM 9820 / NBRC 100138 / K1).